The following is a 122-amino-acid chain: Fluoride-specific ion channel FluC (122 aa).

A run of 4 helical transmembrane segments spans residues 1–21 (MYAF…RHYL), 35–55 (WAIL…SAYL), 67–87 (FLLT…LNLI), and 98–118 (FLNL…GFWL). Residues G74 and T77 each coordinate Na(+).

It belongs to the fluoride channel Fluc/FEX (TC 1.A.43) family.

The protein localises to the cell inner membrane. It catalyses the reaction fluoride(in) = fluoride(out). Its activity is regulated as follows. Na(+) is not transported, but it plays an essential structural role and its presence is essential for fluoride channel function. Functionally, fluoride-specific ion channel. Important for reducing fluoride concentration in the cell, thus reducing its toxicity. The polypeptide is Fluoride-specific ion channel FluC (Dichelobacter nodosus (strain VCS1703A)).